An 829-amino-acid chain; its full sequence is Periplasmic nitrate reductase (829 aa).

A signal peptide (tat-type signal) is located at residues Met1 to Ala29. One can recognise a 4Fe-4S Mo/W bis-MGD-type domain in the interval Ile41–Asp97. Residues Cys48, Cys51, Cys55, and Cys83 each coordinate [4Fe-4S] cluster. Residues Lys85, Gln152, Asn177, Cys181, Trp214–Met221, Ser245–His249, Gln264–Asp266, Met374, Gln378, Asn484, Ser510–Asp511, Lys533, Asp560, and Thr718–Thr727 contribute to the Mo-bis(molybdopterin guanine dinucleotide) site. Phe794 serves as a coordination point for substrate. Residues Asn802 and Lys819 each coordinate Mo-bis(molybdopterin guanine dinucleotide).

It belongs to the prokaryotic molybdopterin-containing oxidoreductase family. NasA/NapA/NarB subfamily. Component of the periplasmic nitrate reductase NapAB complex composed of NapA and NapB. [4Fe-4S] cluster is required as a cofactor. Requires Mo-bis(molybdopterin guanine dinucleotide) as cofactor. In terms of processing, predicted to be exported by the Tat system. The position of the signal peptide cleavage has not been experimentally proven.

It is found in the periplasm. The enzyme catalyses 2 Fe(II)-[cytochrome] + nitrate + 2 H(+) = 2 Fe(III)-[cytochrome] + nitrite + H2O. Functionally, catalytic subunit of the periplasmic nitrate reductase complex NapAB. Receives electrons from NapB and catalyzes the reduction of nitrate to nitrite. The sequence is that of Periplasmic nitrate reductase from Aliivibrio fischeri (strain ATCC 700601 / ES114) (Vibrio fischeri).